The primary structure comprises 194 residues: MLLGTVVTVLSTLPAIAYAMDPESPEHEGMPQLNFANPLTTSQVVWMALILLAFYLLLSKWALPQVSQVVDDRNASIMGDLDSAHLAKAEANAAVEEMNDAIRRANLEGQAEIEKTVSAAKAKAQQEAAEAHARLERQLADAEARIASSRDTAMGALRDVATDTTQALIARLTGQFPAQDTVEQAVGQALAARS.

Residues 1–21 form a helical membrane-spanning segment; that stretch reads MLLGTVVTVLSTLPAIAYAMD.

This sequence belongs to the ATPase B chain family. F-type ATPases have 2 components, F(1) - the catalytic core - and F(0) - the membrane proton channel. F(1) has five subunits: alpha(3), beta(3), gamma(1), delta(1), epsilon(1). F(0) has three main subunits: a(1), b(2) and c(10-14). The alpha and beta chains form an alternating ring which encloses part of the gamma chain. F(1) is attached to F(0) by a central stalk formed by the gamma and epsilon chains, while a peripheral stalk is formed by the delta and b chains.

The protein resides in the cell inner membrane. Functionally, f(1)F(0) ATP synthase produces ATP from ADP in the presence of a proton or sodium gradient. F-type ATPases consist of two structural domains, F(1) containing the extramembraneous catalytic core and F(0) containing the membrane proton channel, linked together by a central stalk and a peripheral stalk. During catalysis, ATP synthesis in the catalytic domain of F(1) is coupled via a rotary mechanism of the central stalk subunits to proton translocation. In terms of biological role, component of the F(0) channel, it forms part of the peripheral stalk, linking F(1) to F(0). The sequence is that of ATP synthase subunit b 1 from Granulibacter bethesdensis (strain ATCC BAA-1260 / CGDNIH1).